A 302-amino-acid polypeptide reads, in one-letter code: Nudix hydrolase 5 (302 aa).

Residues 122–254 (SHRIGIGAFV…EGNEMFKLIA (133 aa)) form the Nudix hydrolase domain. The Nudix box motif lies at 159-180 (GTIKEGESIWAGAVREVKEETD). Residues glutamate 174 and glutamate 178 each contribute to the Mg(2+) site.

This sequence belongs to the Nudix hydrolase family. The cofactor is Mg(2+). Requires Mn(2+) as cofactor. In terms of tissue distribution, expressed in roots, stems and leaves.

Probably mediates the hydrolysis of some nucleoside diphosphate derivatives. The chain is Nudix hydrolase 5 (NUDT5) from Arabidopsis thaliana (Mouse-ear cress).